Consider the following 202-residue polypeptide: Small ribosomal subunit protein uS4c (202 aa).

Residues 90 to 158 (MRSDNVIFRL…ISKNIELYQK (69 aa)) form the S4 RNA-binding domain.

This sequence belongs to the universal ribosomal protein uS4 family. Part of the 30S ribosomal subunit. Contacts protein S5. The interaction surface between S4 and S5 is involved in control of translational fidelity.

It is found in the plastid. Its subcellular location is the chloroplast. Functionally, one of the primary rRNA binding proteins, it binds directly to 16S rRNA where it nucleates assembly of the body of the 30S subunit. With S5 and S12 plays an important role in translational accuracy. The polypeptide is Small ribosomal subunit protein uS4c (rps4) (Anthoceros punctatus (Hornwort)).